We begin with the raw amino-acid sequence, 101 residues long: Replication restart protein PriB (101 aa).

One can recognise an SSB domain in the interval 1–101 (MTTNNLVLSG…IHAENVELKT (101 aa)).

It belongs to the PriB family. In terms of assembly, homodimer. Interacts with PriA and DnaT. Component of the replication restart primosome. Primosome assembly occurs via a 'hand-off' mechanism. PriA binds to replication forks, subsequently PriB then DnaT bind; DnaT then displaces ssDNA to generate the helicase loading substrate.

Involved in the restart of stalled replication forks, which reloads the replicative helicase on sites other than the origin of replication; the PriA-PriB pathway is the major replication restart pathway. During primosome assembly it facilitates complex formation between PriA and DnaT on DNA; stabilizes PriA on DNA. Stimulates the DNA unwinding activity of PriA helicase. This chain is Replication restart protein PriB, found in Shewanella baltica (strain OS223).